The sequence spans 619 residues: ATP-dependent zinc metalloprotease FtsH (619 aa).

At 1 to 5 (MKYFK) the chain is on the cytoplasmic side. A helical transmembrane segment spans residues 6–26 (GISFYIIIFILILVIITFFTA). Over 27–110 (TDNPPKMSYS…VTQPPQPPWW (84 aa)) the chain is Extracellular. The chain crosses the membrane as a helical span at residues 111-131 (VSMLPTVGLVIILILIWFFFI). The Cytoplasmic segment spans residues 132–619 (QQSQGGGGGN…GSSQTPQLEG (488 aa)). 204–211 (GPPGTGKT) is an ATP binding site. Zn(2+) is bound at residue His-426. Glu-427 is an active-site residue. The Zn(2+) site is built by His-430 and Asp-502.

This sequence in the central section; belongs to the AAA ATPase family. It in the C-terminal section; belongs to the peptidase M41 family. As to quaternary structure, homohexamer. The cofactor is Zn(2+).

It localises to the cell membrane. Its function is as follows. Acts as a processive, ATP-dependent zinc metallopeptidase for both cytoplasmic and membrane proteins. Plays a role in the quality control of integral membrane proteins. This Ruminiclostridium cellulolyticum (strain ATCC 35319 / DSM 5812 / JCM 6584 / H10) (Clostridium cellulolyticum) protein is ATP-dependent zinc metalloprotease FtsH.